A 151-amino-acid chain; its full sequence is Putative pre-16S rRNA nuclease (151 aa).

This sequence belongs to the YqgF nuclease family.

It localises to the cytoplasm. Could be a nuclease involved in processing of the 5'-end of pre-16S rRNA. The chain is Putative pre-16S rRNA nuclease from Onion yellows phytoplasma (strain OY-M).